The primary structure comprises 412 residues: Argininosuccinate synthase (412 aa).

8-16 contacts ATP; the sequence is AYSGGLDTS. Residue Tyr87 coordinates L-citrulline. Gly117 is an ATP binding site. 3 residues coordinate L-aspartate: Thr119, Asn123, and Asp124. Asn123 contributes to the L-citrulline binding site. Residues Arg127, Ser175, Glu259, and Tyr271 each coordinate L-citrulline.

Belongs to the argininosuccinate synthase family. Type 1 subfamily. Homotetramer.

The protein resides in the cytoplasm. The enzyme catalyses L-citrulline + L-aspartate + ATP = 2-(N(omega)-L-arginino)succinate + AMP + diphosphate + H(+). It functions in the pathway amino-acid biosynthesis; L-arginine biosynthesis; L-arginine from L-ornithine and carbamoyl phosphate: step 2/3. The protein is Argininosuccinate synthase of Clavibacter michiganensis subsp. michiganensis (strain NCPPB 382).